Consider the following 67-residue polypeptide: Large ribosomal subunit protein bL35 (67 aa).

Belongs to the bacterial ribosomal protein bL35 family.

The polypeptide is Large ribosomal subunit protein bL35 (Bartonella henselae (strain ATCC 49882 / DSM 28221 / CCUG 30454 / Houston 1) (Rochalimaea henselae)).